Consider the following 327-residue polypeptide: uncharacterized protein (327 aa).

The first 24 residues, 1–24 (MKQPGFIRLATLALLSTLSFFSHG), serve as a signal peptide directing secretion.

This is an uncharacterized protein from Salmonella typhimurium (strain LT2 / SGSC1412 / ATCC 700720).